Here is a 240-residue protein sequence, read N- to C-terminus: 4-hydroxy-tetrahydrodipicolinate reductase (240 aa).

NAD(+)-binding positions include 79 to 81 (ATT) and 103 to 106 (SANM). The active-site Proton donor/acceptor is the histidine 135. Position 136 (histidine 136) interacts with (S)-2,3,4,5-tetrahydrodipicolinate. Catalysis depends on lysine 139, which acts as the Proton donor. Residue 145–146 (GT) participates in (S)-2,3,4,5-tetrahydrodipicolinate binding.

Belongs to the DapB family.

It localises to the cytoplasm. The enzyme catalyses (S)-2,3,4,5-tetrahydrodipicolinate + NAD(+) + H2O = (2S,4S)-4-hydroxy-2,3,4,5-tetrahydrodipicolinate + NADH + H(+). The catalysed reaction is (S)-2,3,4,5-tetrahydrodipicolinate + NADP(+) + H2O = (2S,4S)-4-hydroxy-2,3,4,5-tetrahydrodipicolinate + NADPH + H(+). The protein operates within amino-acid biosynthesis; L-lysine biosynthesis via DAP pathway; (S)-tetrahydrodipicolinate from L-aspartate: step 4/4. Catalyzes the conversion of 4-hydroxy-tetrahydrodipicolinate (HTPA) to tetrahydrodipicolinate. The chain is 4-hydroxy-tetrahydrodipicolinate reductase from Staphylococcus aureus (strain MRSA252).